Reading from the N-terminus, the 536-residue chain is Lysosomal acid glucosylceramidase (536 aa).

The N-terminal stretch at 1–39 (MEFSSPSREECPKPSGRVSIMAGSLTGLLLLQAVSWASG) is a signal peptide. Cystine bridges form between cysteine 43–cysteine 55 and cysteine 57–cysteine 62. 3 N-linked (GlcNAc...) asparagine glycosylation sites follow: asparagine 58, asparagine 98, and asparagine 185. Residue glutamate 274 is the Proton donor of the active site. A glycan (N-linked (GlcNAc...) asparagine) is linked at asparagine 309. Glutamate 379 functions as the Nucleophile in the catalytic mechanism. The N-linked (GlcNAc...) asparagine glycan is linked to asparagine 501.

This sequence belongs to the glycosyl hydrolase 30 family. As to quaternary structure, interacts with saposin-C. Interacts with SCARB2. Interacts with TCP1. Interacts with GRN; this interaction prevents aggregation of GBA1-SCARB2 complex via interaction with HSPA1A upon stress.

It localises to the lysosome membrane. The catalysed reaction is a beta-D-glucosyl-(1&lt;-&gt;1')-N-acylsphing-4-enine + H2O = an N-acylsphing-4-enine + D-glucose. The enzyme catalyses a beta-D-galactosyl-(1&lt;-&gt;1')-N-acylsphing-4-enine + H2O = an N-acylsphing-4-enine + D-galactose. It catalyses the reaction cholesteryl 3-beta-D-glucoside + H2O = cholesterol + D-glucose. It carries out the reaction a beta-D-glucosyl-(1&lt;-&gt;1')-N-acylsphing-4-enine + cholesterol = cholesteryl 3-beta-D-glucoside + an N-acylsphing-4-enine. The catalysed reaction is beta-D-glucosyl-N-(9Z-octadecenoyl)-sphing-4E-enine + cholesterol = N-(9Z-octadecenoyl)-sphing-4-enine + cholesteryl 3-beta-D-glucoside. The enzyme catalyses beta-D-glucosyl-N-octanoylsphing-4E-enine + cholesterol = N-octanoylsphing-4-enine + cholesteryl 3-beta-D-glucoside. It catalyses the reaction beta-D-glucosyl-N-dodecanoylsphing-4-enine + cholesterol = N-dodecanoylsphing-4-enine + cholesteryl 3-beta-D-glucoside. It carries out the reaction beta-D-glucosyl-(1&lt;-&gt;1)-N-octadecanoylsphing-4-enine + cholesterol = N-octadecanoylsphing-4-enine + cholesteryl 3-beta-D-glucoside. The catalysed reaction is beta-D-glucosyl-(1&lt;-&gt;1')-N-(15Z-tetracosenoyl)-sphing-4-enine + cholesterol = N-(15Z-tetracosenoyl)-sphing-4-enine + cholesteryl 3-beta-D-glucoside. The enzyme catalyses a beta-D-galactosyl-(1&lt;-&gt;1')-N-acylsphing-4-enine + cholesterol = cholesteryl 3-beta-D-galactoside + an N-acylsphing-4-enine. It catalyses the reaction 1-(beta-D-galactosyl)-N-dodecanoylsphing-4-enine + cholesterol = cholesteryl 3-beta-D-galactoside + N-dodecanoylsphing-4-enine. It carries out the reaction a beta-D-xylosyl-(1&lt;-&gt;1')-N-acylsphing-4-enine + cholesterol = cholesteryl 3-beta-D-xyloside + an N-acylsphing-4-enine. The catalysed reaction is beta-D-xylosyl-(1&lt;-&gt;1')-N-(9Z-octadecenoyl)-sphing-4-enine + cholesterol = cholesteryl 3-beta-D-xyloside + N-(9Z-octadecenoyl)-sphing-4-enine. Its pathway is steroid metabolism; cholesterol metabolism. It participates in sphingolipid metabolism. Functionally, glucosylceramidase that catalyzes, within the lysosomal compartment, the hydrolysis of glucosylceramides/GlcCers (such as beta-D-glucosyl-(1&lt;-&gt;1')-N-acylsphing-4-enine) into free ceramides (such as N-acylsphing-4-enine) and glucose. Plays a central role in the degradation of complex lipids and the turnover of cellular membranes. Through the production of ceramides, participates in the PKC-activated salvage pathway of ceramide formation. Catalyzes the glucosylation of cholesterol, through a transglucosylation reaction where glucose is transferred from GlcCer to cholesterol. GlcCer containing mono-unsaturated fatty acids (such as beta-D-glucosyl-N-(9Z-octadecenoyl)-sphing-4-enine) are preferred as glucose donors for cholesterol glucosylation when compared with GlcCer containing same chain length of saturated fatty acids (such as beta-D-glucosyl-N-octadecanoyl-sphing-4-enine). Under specific conditions, may alternatively catalyze the reverse reaction, transferring glucose from cholesteryl 3-beta-D-glucoside to ceramide. Can also hydrolyze cholesteryl 3-beta-D-glucoside producing glucose and cholesterol. Catalyzes the hydrolysis of galactosylceramides/GalCers (such as beta-D-galactosyl-(1&lt;-&gt;1')-N-acylsphing-4-enine), as well as the transfer of galactose between GalCers and cholesterol in vitro, but with lower activity than with GlcCers. Contrary to GlcCer and GalCer, xylosylceramide/XylCer (such as beta-D-xyosyl-(1&lt;-&gt;1')-N-acylsphing-4-enine) is not a good substrate for hydrolysis, however it is a good xylose donor for transxylosylation activity to form cholesteryl 3-beta-D-xyloside. This is Lysosomal acid glucosylceramidase (GBA1) from Pan troglodytes (Chimpanzee).